Reading from the N-terminus, the 513-residue chain is MEISWGRALWRNFLGQSPDWYKLALIIFLIVNPLIFLISPFVAGWLLVAEFIFTLAMALKCYPLLPGGLLAIEAVFIGMTSAEHVREEVAANLEVLLLLMFMVAGIYFMKQLLLFIFTRLLLSIRSKMLLSLSFCVAAAFLSAFLDALTVVAVVISVAVGFYGIYHRVASSRTEDTDLQDDSHIDKHYKVVLEQFRGFLRSLMMHAGVGTALGGVMTMVGEPQNLIIAKAAGWHFGDFFLRMSPVTVPVLICGLLTCLLVEKLRWFGYGETLPEKVREVLQQFDDQSRLQRTRQDKIRLIVQAIIGVWLVTALALHLAEVGLIGLSVIILATSLTGVTDEHAIGKAFTESLPFTALLTVFFSVVAVIIDQQLFSPIIQFVLQASEHAQLSLFYIFNGLLSSISDNVFVGTIYINEAKAAMKSGAITLKQYELLAVAINTGTNLPSVATPNGQAAFLFLLTSALAPLIRLSYGRMVWMALPYTLVLTLVGLLCVEFTLAPVTEWFMQMGWIATL.

Transmembrane regions (helical) follow at residues 23-43, 52-72, 97-117, 120-140, 144-164, 202-222, 238-258, 303-323, 348-368, 391-411, 447-467, and 475-495; these read LALI…PFVA, IFTL…LLAI, LLLM…LFIF, LLLS…AAAF, FLDA…FYGI, LMMH…VGEP, FFLR…LTCL, AIIG…VGLI, TESL…AVII, LFYI…VGTI, ATPN…APLI, and VWMA…CVEF.

It belongs to the NhaB Na(+)/H(+) (TC 2.A.34) antiporter family.

The protein resides in the cell inner membrane. The catalysed reaction is 2 Na(+)(in) + 3 H(+)(out) = 2 Na(+)(out) + 3 H(+)(in). Na(+)/H(+) antiporter that extrudes sodium in exchange for external protons. The polypeptide is Na(+)/H(+) antiporter NhaB (Escherichia coli O45:K1 (strain S88 / ExPEC)).